The following is a 305-amino-acid chain: Putative glutamine amidotransferase MTH_191 (305 aa).

The active site involves Cys-2. Residues 2–305 form the Glutamine amidotransferase type-2 domain; it reads CGIAGVVYKD…SPGEVRVYEI (304 aa).

This Methanothermobacter thermautotrophicus (strain ATCC 29096 / DSM 1053 / JCM 10044 / NBRC 100330 / Delta H) (Methanobacterium thermoautotrophicum) protein is Putative glutamine amidotransferase MTH_191.